We begin with the raw amino-acid sequence, 1893 residues long: Plexin-A4 (1893 aa).

The N-terminal stretch at Met1–Ser23 is a signal peptide. Positions Thr24–Val506 constitute a Sema domain. The Extracellular portion of the chain corresponds to Thr24 to Pro1236. Cystine bridges form between Cys94–Cys103, Cys129–Cys137, Cys283–Cys404, Cys299–Cys355, Cys373–Cys392, Cys509–Cys526, Cys515–Cys557, Cys518–Cys535, Cys529–Cys541, and Cys592–Cys611. The PSI 1 domain occupies Ser508–Val558. An N-linked (GlcNAc...) asparagine glycan is attached at Asn654. 2 consecutive PSI domains span residues Asn654–Pro701 and Lys802–Thr855. IPT/TIG domains lie at Pro857–Met951, Leu953–Val1036, Pro1039–Tyr1138, and Pro1141–Pro1229. Residues Asn1006, Asn1131, and Asn1179 are each glycosylated (N-linked (GlcNAc...) asparagine). Residues Ala1237 to Ile1257 traverse the membrane as a helical segment. Over Ala1258 to Ser1893 the chain is Cytoplasmic. At Lys1349 the chain carries N6-acetyllysine.

The protein belongs to the plexin family. In terms of assembly, interacts with NRP1 and NRP2. Expressed in the developing nervous system. Widely expressed in both the central and peripheral nervous systems. Expressed in the peripheral ganglia, somatosensory, olfactory, visual, auditory and equilibrium systems.

It is found in the cell membrane. Functionally, coreceptor for SEMA3A. Necessary for signaling by class 3 semaphorins and subsequent remodeling of the cytoskeleton. Plays a role in axon guidance in the developing nervous system. Class 3 semaphorins bind to a complex composed of a neuropilin and a plexin. The plexin modulates the affinity of the complex for specific semaphorins, and its cytoplasmic domain is required for the activation of down-stream signaling events in the cytoplasm. The polypeptide is Plexin-A4 (Plxna4) (Mus musculus (Mouse)).